The chain runs to 251 residues: Arginine and glutamate-rich protein 1-A (251 aa).

The span at 1–48 (MGRSRSRSSSRSKHSKHSRKRSRSKSKSKKRSRSKEPKRNRRSRSRSG) shows a compositional bias: basic residues. Positions 1 to 53 (MGRSRSRSSSRSKHSKHSRKRSRSKSKSKKRSRSKEPKRNRRSRSRSGSRRDR) are necessary and sufficient for RNA binding. Disordered stretches follow at residues 1–92 (MGRS…ERQR) and 215–251 (RMKL…KATE). Basic and acidic residues-rich tracts occupy residues 49-63 (SRRD…RTDM), 71-92 (RNND…ERQR), and 215-231 (RMKL…EEQK). The tract at residues 54–251 (GGSPPDRTDM…RLSFSLKATE (198 aa)) is necessary and sufficient for transcriptional regulation.

It belongs to the ARGLU1 family.

Its subcellular location is the nucleus. It localises to the nucleus speckle. The protein resides in the chromosome. Dual function regulator of gene expression; regulator of transcription and modulator of alternative splicing. General coactivator of nuclear receptor-induced gene expression. The polypeptide is Arginine and glutamate-rich protein 1-A (arglu1a) (Danio rerio (Zebrafish)).